The sequence spans 321 residues: Lipoyl synthase (321 aa).

[4Fe-4S] cluster contacts are provided by C68, C73, C79, C94, C98, C101, and S308. Residues 80-297 (FNHGTATFMI…KEIALELGFT (218 aa)) form the Radical SAM core domain.

It belongs to the radical SAM superfamily. Lipoyl synthase family. [4Fe-4S] cluster is required as a cofactor.

The protein resides in the cytoplasm. The catalysed reaction is [[Fe-S] cluster scaffold protein carrying a second [4Fe-4S](2+) cluster] + N(6)-octanoyl-L-lysyl-[protein] + 2 oxidized [2Fe-2S]-[ferredoxin] + 2 S-adenosyl-L-methionine + 4 H(+) = [[Fe-S] cluster scaffold protein] + N(6)-[(R)-dihydrolipoyl]-L-lysyl-[protein] + 4 Fe(3+) + 2 hydrogen sulfide + 2 5'-deoxyadenosine + 2 L-methionine + 2 reduced [2Fe-2S]-[ferredoxin]. Its pathway is protein modification; protein lipoylation via endogenous pathway; protein N(6)-(lipoyl)lysine from octanoyl-[acyl-carrier-protein]: step 2/2. Functionally, catalyzes the radical-mediated insertion of two sulfur atoms into the C-6 and C-8 positions of the octanoyl moiety bound to the lipoyl domains of lipoate-dependent enzymes, thereby converting the octanoylated domains into lipoylated derivatives. This is Lipoyl synthase from Vibrio atlanticus (strain LGP32) (Vibrio splendidus (strain Mel32)).